A 241-amino-acid polypeptide reads, in one-letter code: MEEQPRERSEAGAEACEEKRGLSQAAEERIEDRISLLLRLRAQTKQQLLEYKSMIDTNEEKTPEQIMQEKQIEVKIEELENEIEDVKSNIEMKSLALSRMKLSVALRDNMENMGPENCVLTDDMKHILKLQKLIMKSQEESSELEKKLLDVRKKRLQLKQASRSKLLEIQIEKNKQKEDVDKMENSEMIKTMKKKLQTEIKITTVVQHTFQGLILASKTNWAEDPALRETVLQLEKDLNTL.

Position 1 is an N-acetylmethionine (Met-1). The disordered stretch occupies residues 1–24; that stretch reads MEEQPRERSEAGAEACEEKRGLSQ. The stretch at 28 to 186 forms a coiled coil; it reads ERIEDRISLL…KEDVDKMENS (159 aa). Residue Lys-61 forms a Glycyl lysine isopeptide (Lys-Gly) (interchain with G-Cter in SUMO2) linkage. Thr-62 is modified (phosphothreonine).

It belongs to the CENP-H/MCM16 family. As to quaternary structure, self-associates. Component of the CENPA-NAC complex, at least composed of CENPA, CENPC, CENPH, CENPM, CENPN, CENPT and CENPU. The CENPA-NAC complex interacts with the CENPA-CAD complex, composed of CENPI, CENPK, CENPL, CENPO, CENPP, CENPQ, CENPR and CENPS. Interacts directly with CENPK. Interacts with KIF2C and NDC80. Interacts with TRIM36. In terms of tissue distribution, abundantly expressed in thymus, spleen, uterus, ovary, testis and muscle, and weakly expressed in small intestine, lung and stomach. Barely detectable expression in kidney, liver, skin and prostate gland. Not detected in brain, heart or adrenal gland. Also expressed weakly in various hematopoietic cell lines.

The protein localises to the nucleus. It is found in the chromosome. The protein resides in the centromere. It localises to the kinetochore. In terms of biological role, component of the CENPA-NAC (nucleosome-associated) complex, a complex that plays a central role in assembly of kinetochore proteins, mitotic progression and chromosome segregation. The CENPA-NAC complex recruits the CENPA-CAD (nucleosome distal) complex and may be involved in incorporation of newly synthesized CENPA into centromeres. Required for chromosome congression and efficiently align the chromosomes on a metaphase plate. In Mus musculus (Mouse), this protein is Centromere protein H.